The primary structure comprises 403 residues: High affinity transport system protein p37 (403 aa).

The first 23 residues, 1-23 (MLKKLKNFILFSSIFSPIAFAIS), serve as a signal peptide directing secretion. The N-palmitoyl cysteine moiety is linked to residue Cys-24. Residue Cys-24 is the site of S-diacylglycerol cysteine attachment.

It is found in the cell membrane. In terms of biological role, P37 is part of a high-affinity transport system. The protein is High affinity transport system protein p37 (p37) of Mesomycoplasma hyorhinis (Mycoplasma hyorhinis).